The primary structure comprises 295 residues: Cytidine deaminase (295 aa).

2 CMP/dCMP-type deaminase domains span residues Ser-48–Ala-168 and Asp-187–Val-295. Substrate is bound at residue Asn-89–Glu-91. His-102 is a binding site for Zn(2+). The active-site Proton donor is Glu-104. Zn(2+) contacts are provided by Cys-129 and Cys-132.

It belongs to the cytidine and deoxycytidylate deaminase family. As to quaternary structure, homodimer. The cofactor is Zn(2+).

It carries out the reaction cytidine + H2O + H(+) = uridine + NH4(+). The enzyme catalyses 2'-deoxycytidine + H2O + H(+) = 2'-deoxyuridine + NH4(+). Its function is as follows. This enzyme scavenges exogenous and endogenous cytidine and 2'-deoxycytidine for UMP synthesis. This is Cytidine deaminase from Vibrio parahaemolyticus serotype O3:K6 (strain RIMD 2210633).